The chain runs to 258 residues: Venom plasminogen activator (258 aa).

Positions 1–18 (MVLIRVLANLLILQLSYA) are cleaved as a signal peptide. A propeptide spanning residues 19 to 24 (QKSSEL) is cleaved from the precursor. Positions 25-249 (VVGGDECNIN…YTDWIQSIIS (225 aa)) constitute a Peptidase S1 domain. Cystine bridges form between Cys31-Cys163, Cys50-Cys66, Cys98-Cys256, Cys142-Cys210, Cys174-Cys189, and Cys200-Cys225. Residue Asn44 is glycosylated (N-linked (GlcNAc...) asparagine). Catalysis depends on charge relay system residues His65 and Asp110. Ser204 (charge relay system) is an active-site residue.

This sequence belongs to the peptidase S1 family. Snake venom subfamily. Monomer. Expressed by the venom gland.

The protein localises to the secreted. Functionally, snake venom serine protease that activates plasminogen. Shows a preferential cleavage at Arg-|-Xaa instead of Lys-|-Xaa bonds. This chain is Venom plasminogen activator, found in Agkistrodon piscivorus leucostoma (Western cottonmouth).